A 198-amino-acid polypeptide reads, in one-letter code: dCTP deaminase, dUMP-forming (198 aa).

DCTP is bound by residues Lys115 to Arg120, Asp133, Thr141 to Glu143, Gln162, Tyr175, and Lys184. Catalysis depends on Glu143, which acts as the Proton donor/acceptor.

It belongs to the dCTP deaminase family. In terms of assembly, homotrimer.

It catalyses the reaction dCTP + 2 H2O = dUMP + NH4(+) + diphosphate. The protein operates within pyrimidine metabolism; dUMP biosynthesis; dUMP from dCTP: step 1/1. Bifunctional enzyme that catalyzes both the deamination of dCTP to dUTP and the hydrolysis of dUTP to dUMP without releasing the toxic dUTP intermediate. The sequence is that of dCTP deaminase, dUMP-forming from Nanoarchaeum equitans (strain Kin4-M).